The primary structure comprises 391 residues: Multidrug resistance protein MdtL (391 aa).

12 helical membrane passes run 4–24, 42–62, 69–89, 93–113, 131–151, 158–178, 203–222, 245–265, 269–289, 293–313, 331–351, and 356–376; these read FLICSFALVLLYPAGIDMYLV, IAFSVYLAGMAAAMLFAGKVA, PVAIPGAALFIIASVFCSLAE, LFLAGRFLQGLGAGCCYVVAF, LLNGITCIIPVLAPVLGHLIM, SLFWTMATMGIALLMLSLFIL, FFLSRVVITTLSVSVILTFV, ALTAGVSMTVSFSTPFALGIF, TLMITSQVLFLAAGITLAVSP, VSLFGITLICAGFSVGFGVAM, LGIAQVCGSSLWIWLAAVVGI, and MLIGILIACSIVSLLLIMFVA.

It belongs to the major facilitator superfamily. DHA1 family. MdtL (TC 2.A.1.2.22) subfamily.

Its subcellular location is the cell inner membrane. In terms of biological role, confers resistance to chloramphenicol. This chain is Multidrug resistance protein MdtL, found in Escherichia coli O45:K1 (strain S88 / ExPEC).